A 390-amino-acid chain; its full sequence is Succinate--CoA ligase [ADP-forming] subunit beta (390 aa).

Positions 9–244 (KEIFREYGVP…LSEEDPVEVE (236 aa)) constitute an ATP-grasp domain. ATP is bound by residues Lys46, 53 to 55 (GRG), Glu99, Ala102, and Glu107. Residues Asn199 and Asp213 each contribute to the Mg(2+) site. Substrate-binding positions include Asn264 and 321 to 323 (GIV).

Belongs to the succinate/malate CoA ligase beta subunit family. As to quaternary structure, heterotetramer of two alpha and two beta subunits. Mg(2+) serves as cofactor.

The enzyme catalyses succinate + ATP + CoA = succinyl-CoA + ADP + phosphate. The catalysed reaction is GTP + succinate + CoA = succinyl-CoA + GDP + phosphate. Its pathway is carbohydrate metabolism; tricarboxylic acid cycle; succinate from succinyl-CoA (ligase route): step 1/1. Its function is as follows. Succinyl-CoA synthetase functions in the citric acid cycle (TCA), coupling the hydrolysis of succinyl-CoA to the synthesis of either ATP or GTP and thus represents the only step of substrate-level phosphorylation in the TCA. The beta subunit provides nucleotide specificity of the enzyme and binds the substrate succinate, while the binding sites for coenzyme A and phosphate are found in the alpha subunit. This Nitratiruptor sp. (strain SB155-2) protein is Succinate--CoA ligase [ADP-forming] subunit beta.